The sequence spans 516 residues: Delta(24)-sterol reductase (516 aa).

The N-terminal stretch at 1–22 is a signal peptide; that stretch reads MEPAVSLAVCALLFLLWVRLKG. The Lumenal segment spans residues 23 to 31; that stretch reads LEFVLIHQR. The helical transmembrane segment at 32-52 threads the bilayer; sequence WVFVCLFLLPLSLIFDIYYYV. Topologically, residues 53 to 516 are cytoplasmic; sequence RAWVVFKLSS…YDKICKAARH (464 aa). Positions 58 to 234 constitute an FAD-binding PCMH-type domain; the sequence is FKLSSAPRLH…VAAEIRIIPA (177 aa). 163-175 provides a ligand contact to FAD; sequence TVGGLIMGTGIES.

This sequence belongs to the FAD-binding oxidoreductase/transferase type 4 family. Interacts with DHCR7; this interaction regulates DHCR7 activity. FAD serves as cofactor. In terms of tissue distribution, highly expressed in brain and adrenal gland with moderate expression in liver, lung, spleen, prostate and spinal cord. Low expression in heart, uterus and prostate. Undetectable in blood cells. In the brain, strongly expressed in cortical regions, substantia nigra, caudate nucleus, hippocampus, medulla oblongata and pons. In brains affected by Alzheimer disease, expression in the inferior temporal lobe is substantially lower than in the frontal cortex.

The protein localises to the endoplasmic reticulum membrane. It is found in the golgi apparatus membrane. It carries out the reaction cholesterol + NADP(+) = desmosterol + NADPH + H(+). It catalyses the reaction lanosterol + NADPH + H(+) = 24,25-dihydrolanosterol + NADP(+). The catalysed reaction is 5alpha-cholest-8-en-3beta-ol + NADP(+) = zymosterol + NADPH + H(+). Its pathway is steroid biosynthesis; cholesterol biosynthesis. Its function is as follows. Catalyzes the reduction of the delta-24 double bond of sterol intermediates during cholesterol biosynthesis. In addition to its cholesterol-synthesizing activity, can protect cells from oxidative stress by reducing caspase 3 activity during apoptosis induced by oxidative stress. Also protects against amyloid-beta peptide-induced apoptosis. This is Delta(24)-sterol reductase (DHCR24) from Homo sapiens (Human).